Reading from the N-terminus, the 602-residue chain is Glutamine--fructose-6-phosphate aminotransferase [isomerizing] (602 aa).

The Nucleophile; for GATase activity role is filled by C2. Residues 2–217 (CGIVGVVGNT…DQELVIVKAD (216 aa)) enclose the Glutamine amidotransferase type-2 domain. The tract at residues 67-87 (IGHTRWATHGKPTEDNAHPHR) is disordered. Over residues 77–87 (KPTEDNAHPHR) the composition is skewed to basic and acidic residues. 2 consecutive SIS domains span residues 283–422 (IIKA…ANGN) and 455–592 (VREL…VDKP). Catalysis depends on K597, which acts as the For Fru-6P isomerization activity.

Homodimer.

It localises to the cytoplasm. The enzyme catalyses D-fructose 6-phosphate + L-glutamine = D-glucosamine 6-phosphate + L-glutamate. In terms of biological role, catalyzes the first step in hexosamine metabolism, converting fructose-6P into glucosamine-6P using glutamine as a nitrogen source. This chain is Glutamine--fructose-6-phosphate aminotransferase [isomerizing], found in Streptococcus pneumoniae serotype 4 (strain ATCC BAA-334 / TIGR4).